A 596-amino-acid chain; its full sequence is Elongation factor 4 (596 aa).

Residues 2-184 enclose the tr-type G domain; sequence KNIRNFSIIA…TIVKNIPSPA (183 aa). Residues 14–19 and 131–134 contribute to the GTP site; these read DHGKST and NKID.

Belongs to the TRAFAC class translation factor GTPase superfamily. Classic translation factor GTPase family. LepA subfamily.

The protein resides in the cell inner membrane. It carries out the reaction GTP + H2O = GDP + phosphate + H(+). Functionally, required for accurate and efficient protein synthesis under certain stress conditions. May act as a fidelity factor of the translation reaction, by catalyzing a one-codon backward translocation of tRNAs on improperly translocated ribosomes. Back-translocation proceeds from a post-translocation (POST) complex to a pre-translocation (PRE) complex, thus giving elongation factor G a second chance to translocate the tRNAs correctly. Binds to ribosomes in a GTP-dependent manner. This chain is Elongation factor 4, found in Colwellia psychrerythraea (strain 34H / ATCC BAA-681) (Vibrio psychroerythus).